The primary structure comprises 104 residues: Large ribosomal subunit protein bL21 (104 aa).

Belongs to the bacterial ribosomal protein bL21 family. As to quaternary structure, part of the 50S ribosomal subunit. Contacts protein L20.

In terms of biological role, this protein binds to 23S rRNA in the presence of protein L20. The sequence is that of Large ribosomal subunit protein bL21 from Thermodesulfovibrio yellowstonii (strain ATCC 51303 / DSM 11347 / YP87).